The sequence spans 393 residues: NAD(P)H-quinone oxidoreductase subunit H, chloroplastic (393 aa).

This sequence belongs to the complex I 49 kDa subunit family. In terms of assembly, NDH is composed of at least 16 different subunits, 5 of which are encoded in the nucleus.

The protein resides in the plastid. The protein localises to the chloroplast thylakoid membrane. It carries out the reaction a plastoquinone + NADH + (n+1) H(+)(in) = a plastoquinol + NAD(+) + n H(+)(out). The catalysed reaction is a plastoquinone + NADPH + (n+1) H(+)(in) = a plastoquinol + NADP(+) + n H(+)(out). NDH shuttles electrons from NAD(P)H:plastoquinone, via FMN and iron-sulfur (Fe-S) centers, to quinones in the photosynthetic chain and possibly in a chloroplast respiratory chain. The immediate electron acceptor for the enzyme in this species is believed to be plastoquinone. Couples the redox reaction to proton translocation, and thus conserves the redox energy in a proton gradient. The polypeptide is NAD(P)H-quinone oxidoreductase subunit H, chloroplastic (Acorus calamus var. americanus (American sweet flag)).